A 259-amino-acid polypeptide reads, in one-letter code: Thiamine thiazole synthase (259 aa).

NAD(+)-binding positions include A33, 52–53 (ER), G60, V124, and 152–154 (HVD). Residues D154 and H169 each coordinate Fe cation. M219 lines the NAD(+) pocket. Position 229 (R229) interacts with glycine.

It belongs to the THI4 family. As to quaternary structure, homooctamer; tetramer of dimers. Fe(2+) serves as cofactor.

It catalyses the reaction hydrogen sulfide + glycine + NAD(+) = ADP-5-ethyl-4-methylthiazole-2-carboxylate + nicotinamide + 3 H2O + H(+). The protein operates within cofactor biosynthesis; thiamine diphosphate biosynthesis. Functionally, involved in the biosynthesis of the thiazole moiety of thiamine. Catalyzes the conversion of NAD and glycine to adenosine diphosphate 5-(2-hydroxyethyl)-4-methylthiazole-2-carboxylate (ADT), an adenylated thiazole intermediate, using free sulfide as a source of sulfur. The polypeptide is Thiamine thiazole synthase (Pyrobaculum neutrophilum (strain DSM 2338 / JCM 9278 / NBRC 100436 / V24Sta) (Thermoproteus neutrophilus)).